A 289-amino-acid chain; its full sequence is MYG1 protein CT_386 (289 aa).

The protein belongs to the MYG1 family.

This is MYG1 protein CT_386 from Chlamydia trachomatis serovar D (strain ATCC VR-885 / DSM 19411 / UW-3/Cx).